The chain runs to 273 residues: Oxidized low-density lipoprotein receptor 1 (273 aa).

The tract at residues 1 to 22 (MTFDDLKIQTVKDQPDEKSNGK) is disordered. Over 1 to 36 (MTFDDLKIQTVKDQPDEKSNGKKAKGLQFLYSPWWC) the chain is Cytoplasmic. Residues cysteine 36 and cysteine 46 are each lipidated (S-palmitoyl cysteine). The chain crosses the membrane as a helical; Signal-anchor for type II membrane protein span at residues 37–57 (LAAATLGVLCLGLVVTIMVLG). The tract at residues 58–150 (MQLSQVSDLL…SAPCPQDWIW (93 aa)) is neck. Topologically, residues 58 to 273 (MQLSQVSDLL…CQKKANLRAQ (216 aa)) are extracellular. Positions 64–123 (SDLLTQEQANLTHQKKKLEGQISARQQAEEASQESENELKEMIETLARKLNEKSKEQMEL) form a coiled coil. The N-linked (GlcNAc...) asparagine glycan is linked to asparagine 73. The N-linked (GlcNAc...) (complex) asparagine glycan is linked to asparagine 139. 3 cysteine pairs are disulfide-bonded: cysteine 144–cysteine 155, cysteine 172–cysteine 264, and cysteine 243–cysteine 256. Residues 151–265 (HGENCYLFSS…CILAAFSICQ (115 aa)) enclose the C-type lectin domain.

In terms of assembly, homodimer; disulfide-linked. May form a hexamer composed of 3 homodimers. Interacts with HSP70. (Microbial infection) Binds to the head and beginning of the coiled stalk of N.meningitidis adhesin A (nadA) variant 3; binding can be abrogated by monoclonal antibodies against the specific regions of NadA. Binding occurs in protein microarrays, in solution and when LOX-1 is expressed on the cell surface. Post-translationally, the intrachain disulfide-bonds prevent N-glycosylation at some sites. In terms of processing, N-glycosylated. In terms of tissue distribution, expressed at high level in endothelial cells and vascular-rich organs such as placenta, lung, liver and brain, aortic intima, bone marrow, spinal cord and substantia nigra. Also expressed at the surface of dendritic cells. Widely expressed at intermediate and low level.

It localises to the cell membrane. The protein localises to the membrane raft. It is found in the secreted. In terms of biological role, receptor that mediates the recognition, internalization and degradation of oxidatively modified low density lipoprotein (oxLDL) by vascular endothelial cells. OxLDL is a marker of atherosclerosis that induces vascular endothelial cell activation and dysfunction, resulting in pro-inflammatory responses, pro-oxidative conditions and apoptosis. Its association with oxLDL induces the activation of NF-kappa-B through an increased production of intracellular reactive oxygen and a variety of pro-atherogenic cellular responses including a reduction of nitric oxide (NO) release, monocyte adhesion and apoptosis. In addition to binding oxLDL, it acts as a receptor for the HSP70 protein involved in antigen cross-presentation to naive T-cells in dendritic cells, thereby participating in cell-mediated antigen cross-presentation. Also involved in inflammatory process, by acting as a leukocyte-adhesion molecule at the vascular interface in endotoxin-induced inflammation. Also acts as a receptor for advanced glycation end (AGE) products, activated platelets, monocytes, apoptotic cells and both Gram-negative and Gram-positive bacteria. Its function is as follows. (Microbial infection) May serve as a receptor for adhesin A variant 3 (nadA) of N.meningitidis. This is Oxidized low-density lipoprotein receptor 1 (OLR1) from Homo sapiens (Human).